The primary structure comprises 319 residues: MSLNFLEFEKPIAELEAKIEALRDVSRHGGDSAVDLDKEIEQLEKKSLELKKKTFSNLGAWETAQLARHPLRPYTLDYIKHAFDEFDELAGDRAFADDKAIVGGIARLEGRPVMIIGHQKGRETKEKVKRNFGMPKPEGYRKALRLMEMAERFNMPIITFIDTAGAYPGVGAEERGQSEAIATNLKVMSGLKVPVICNVVGEGGSGGALAIGVGDYVNMLQYSTYSVISPEGCASILWRDSDKAPQAADAMGLTAPRLKELELIDEIIEEPLGGAHRDHAQMAANMKANLLRQLEDLEQLDHETLLERRYQRLMNYGYC.

A CoA carboxyltransferase C-terminal domain is found at D35 to D296.

It belongs to the AccA family. As to quaternary structure, acetyl-CoA carboxylase is a heterohexamer composed of biotin carboxyl carrier protein (AccB), biotin carboxylase (AccC) and two subunits each of ACCase subunit alpha (AccA) and ACCase subunit beta (AccD).

It is found in the cytoplasm. The enzyme catalyses N(6)-carboxybiotinyl-L-lysyl-[protein] + acetyl-CoA = N(6)-biotinyl-L-lysyl-[protein] + malonyl-CoA. It functions in the pathway lipid metabolism; malonyl-CoA biosynthesis; malonyl-CoA from acetyl-CoA: step 1/1. Component of the acetyl coenzyme A carboxylase (ACC) complex. First, biotin carboxylase catalyzes the carboxylation of biotin on its carrier protein (BCCP) and then the CO(2) group is transferred by the carboxyltransferase to acetyl-CoA to form malonyl-CoA. The sequence is that of Acetyl-coenzyme A carboxylase carboxyl transferase subunit alpha from Vibrio campbellii (strain ATCC BAA-1116).